The following is a 1518-amino-acid chain: Probable serine/threonine-protein kinase HSL1 (1518 aa).

Disordered regions lie at residues 1 to 43 (MTGH…GHLE) and 55 to 83 (RLSQ…PWKL). The span at 55–68 (RLSQPDSTVSVATK) shows a compositional bias: polar residues. Residues 81–369 (WKLGKTLGKG…TQEILKHPLI (289 aa)) form the Protein kinase domain. ATP is bound by residues 87–95 (LGKGSSGRV) and Lys110. Asp239 functions as the Proton acceptor in the catalytic mechanism. Residues 467–502 (LSSSSENKKSATESSVNEPRIEYASKTANNTGLRSE) are disordered. Residues 492-501 (KTANNTGLRS) are compositionally biased toward polar residues. The residue at position 511 (Ser511) is a Phosphoserine. Positions 599 to 611 (SNSRLSLSASTSR) are enriched in low complexity. Residues 599 to 651 (SNSRLSLSASTSRETVHDNEMPLPQLPKSPSRYSLSRRAIHASPSTKSIHKSL) form a disordered region. Phosphoserine occurs at positions 629 and 685. Residues 741-783 (EEEDNEKERDTQRQRQNDTKSSADTFTISGVSTNKENEGPEYP) form a disordered region. A compositionally biased stretch (basic and acidic residues) spans 746–758 (EKERDTQRQRQND). The span at 759-774 (TKSSADTFTISGVSTN) shows a compositional bias: polar residues. Ser837 and Ser866 each carry phosphoserine. A compositionally biased stretch (basic and acidic residues) spans 856–876 (EQLQKKNDRPSPLKPIQHQEL). Disordered stretches follow at residues 856–898 (EQLQ…RRNI), 1005–1030 (DDKH…KQSA), 1150–1170 (APSD…RASV), and 1220–1243 (SPEN…RDSN). Ser1220 is modified (phosphoserine). Positions 1222–1243 (ENPSNTHMQKRFSSTRGSRDSN) are enriched in polar residues. Ser1250 is subject to Phosphoserine. The tract at residues 1259 to 1291 (EEDQDGHTSQADILESSMSYSKRRPSEESVNPK) is disordered. Residues 1265-1278 (HTSQADILESSMSY) show a composition bias toward polar residues. Phosphoserine occurs at positions 1284, 1287, and 1325.

It belongs to the protein kinase superfamily. CAMK Ser/Thr protein kinase family. NIM1 subfamily.

Its subcellular location is the bud neck. The enzyme catalyses L-seryl-[protein] + ATP = O-phospho-L-seryl-[protein] + ADP + H(+). The catalysed reaction is L-threonyl-[protein] + ATP = O-phospho-L-threonyl-[protein] + ADP + H(+). The sequence is that of Probable serine/threonine-protein kinase HSL1 (HSL1) from Saccharomyces cerevisiae (strain ATCC 204508 / S288c) (Baker's yeast).